The chain runs to 362 residues: Histidinol-phosphate aminotransferase (362 aa).

An N6-(pyridoxal phosphate)lysine modification is found at Lys219.

The protein belongs to the class-II pyridoxal-phosphate-dependent aminotransferase family. Histidinol-phosphate aminotransferase subfamily. Homodimer. Pyridoxal 5'-phosphate serves as cofactor.

It carries out the reaction L-histidinol phosphate + 2-oxoglutarate = 3-(imidazol-4-yl)-2-oxopropyl phosphate + L-glutamate. Its pathway is amino-acid biosynthesis; L-histidine biosynthesis; L-histidine from 5-phospho-alpha-D-ribose 1-diphosphate: step 7/9. The sequence is that of Histidinol-phosphate aminotransferase from Maricaulis maris (strain MCS10) (Caulobacter maris).